Here is a 158-residue protein sequence, read N- to C-terminus: Crossover junction endodeoxyribonuclease RuvC (158 aa).

Catalysis depends on residues Asp-7, Glu-66, and Asp-139. Mg(2+) is bound by residues Asp-7, Glu-66, and Asp-139.

Belongs to the RuvC family. As to quaternary structure, homodimer which binds Holliday junction (HJ) DNA. The HJ becomes 2-fold symmetrical on binding to RuvC with unstacked arms; it has a different conformation from HJ DNA in complex with RuvA. In the full resolvosome a probable DNA-RuvA(4)-RuvB(12)-RuvC(2) complex forms which resolves the HJ. The cofactor is Mg(2+).

It is found in the cytoplasm. The catalysed reaction is Endonucleolytic cleavage at a junction such as a reciprocal single-stranded crossover between two homologous DNA duplexes (Holliday junction).. Its function is as follows. The RuvA-RuvB-RuvC complex processes Holliday junction (HJ) DNA during genetic recombination and DNA repair. Endonuclease that resolves HJ intermediates. Cleaves cruciform DNA by making single-stranded nicks across the HJ at symmetrical positions within the homologous arms, yielding a 5'-phosphate and a 3'-hydroxyl group; requires a central core of homology in the junction. The consensus cleavage sequence is 5'-(A/T)TT(C/G)-3'. Cleavage occurs on the 3'-side of the TT dinucleotide at the point of strand exchange. HJ branch migration catalyzed by RuvA-RuvB allows RuvC to scan DNA until it finds its consensus sequence, where it cleaves and resolves the cruciform DNA. In Campylobacter hominis (strain ATCC BAA-381 / DSM 21671 / CCUG 45161 / LMG 19568 / NCTC 13146 / CH001A), this protein is Crossover junction endodeoxyribonuclease RuvC.